The sequence spans 99 residues: Large ribosomal subunit protein uL23 (99 aa).

It belongs to the universal ribosomal protein uL23 family. In terms of assembly, part of the 50S ribosomal subunit. Contacts protein L29, and trigger factor when it is bound to the ribosome.

In terms of biological role, one of the early assembly proteins it binds 23S rRNA. One of the proteins that surrounds the polypeptide exit tunnel on the outside of the ribosome. Forms the main docking site for trigger factor binding to the ribosome. This is Large ribosomal subunit protein uL23 from Agathobacter rectalis (strain ATCC 33656 / DSM 3377 / JCM 17463 / KCTC 5835 / VPI 0990) (Eubacterium rectale).